The primary structure comprises 247 residues: Eukaryotic translation initiation factor 3 subunit J (247 aa).

Disordered stretches follow at residues 1 to 64 (MADW…KTLK) and 77 to 101 (EEKRKAEEKQKLEEEDKELTPEEQM). Acidic residues predominate over residues 24–45 (EGEDEDDDIKESWDDDDEDEKK). Positions 43-108 (EKKEDEAKNT…EQMAEKLRRQ (66 aa)) form a coiled coil.

It belongs to the eIF-3 subunit J family. As to quaternary structure, component of the eukaryotic translation initiation factor 3 (eIF-3) complex.

It localises to the cytoplasm. Component of the eukaryotic translation initiation factor 3 (eIF-3) complex, which is involved in protein synthesis of a specialized repertoire of mRNAs and, together with other initiation factors, stimulates binding of mRNA and methionyl-tRNAi to the 40S ribosome. The eIF-3 complex specifically targets and initiates translation of a subset of mRNAs involved in cell proliferation. The sequence is that of Eukaryotic translation initiation factor 3 subunit J from Nematostella vectensis (Starlet sea anemone).